Here is a 487-residue protein sequence, read N- to C-terminus: Probable Xaa-Pro aminopeptidase AFUB_014460 (487 aa).

Residues Asp267, Asp278, Glu416, and Glu455 each coordinate Mn(2+).

The protein belongs to the peptidase M24B family. It depends on Mn(2+) as a cofactor.

It catalyses the reaction Release of any N-terminal amino acid, including proline, that is linked to proline, even from a dipeptide or tripeptide.. In terms of biological role, catalyzes the removal of a penultimate prolyl residue from the N-termini of peptides. This is Probable Xaa-Pro aminopeptidase AFUB_014460 from Aspergillus fumigatus (strain CBS 144.89 / FGSC A1163 / CEA10) (Neosartorya fumigata).